The chain runs to 487 residues: Acetyl-coenzyme A carboxylase carboxyl transferase subunit beta, chloroplastic (487 aa).

One can recognise a CoA carboxyltransferase N-terminal domain in the interval 223–487 (LWVQCENCYG…LHAFFPLNQN (265 aa)). Positions 227, 230, 246, and 249 each coordinate Zn(2+). The C4-type zinc-finger motif lies at 227-249 (CENCYGLNYKKSFKSKMNLCEQC).

It belongs to the AccD/PCCB family. In terms of assembly, acetyl-CoA carboxylase is a heterohexamer composed of biotin carboxyl carrier protein, biotin carboxylase and 2 subunits each of ACCase subunit alpha and ACCase plastid-coded subunit beta (accD). The cofactor is Zn(2+).

It localises to the plastid. The protein localises to the chloroplast stroma. It catalyses the reaction N(6)-carboxybiotinyl-L-lysyl-[protein] + acetyl-CoA = N(6)-biotinyl-L-lysyl-[protein] + malonyl-CoA. It participates in lipid metabolism; malonyl-CoA biosynthesis; malonyl-CoA from acetyl-CoA: step 1/1. Component of the acetyl coenzyme A carboxylase (ACC) complex. Biotin carboxylase (BC) catalyzes the carboxylation of biotin on its carrier protein (BCCP) and then the CO(2) group is transferred by the transcarboxylase to acetyl-CoA to form malonyl-CoA. This Panax ginseng (Korean ginseng) protein is Acetyl-coenzyme A carboxylase carboxyl transferase subunit beta, chloroplastic.